The sequence spans 289 residues: MFGSAHGDTTSSDTSGRRPLRLVVLPLLLALSSCKVDLYTQLQEREANEMLALLMDSGVDAVRVAGKDGTSTIQVDEKLLAFSIKLLNAKGLPRQSFKNLGEIFQGSGLIASPTEERARYVYALSEELSHTISDIDGVFSARVHVVLPHNDLLRAGDTPSSASVFIRHDAKTNLPALLPKIKMLVAESIEGLAYDKVEVVLVPVERSAQEQRSLLATDLAQASRPIPEPLLAVAVGVSAAVFAVTCYLLFIVLGHRRRQLTGELSRVQERPGVSALAAIRKKIPGLGRR.

An N-terminal signal peptide occupies residues 1-33 (MFGSAHGDTTSSDTSGRRPLRLVVLPLLLALSS). A lipid anchor (N-palmitoyl cysteine) is attached at cysteine 34. Residue cysteine 34 is the site of S-diacylglycerol cysteine attachment. Residues 233–253 (VAVGVSAAVFAVTCYLLFIVL) traverse the membrane as a helical segment.

It belongs to the YscJ lipoprotein family.

The protein resides in the cell outer membrane. The polypeptide is Nodulation protein NolT (nolT) (Sinorhizobium fredii (strain NBRC 101917 / NGR234)).